The sequence spans 662 residues: DNA topoisomerase 4 subunit B (662 aa).

ATP contacts are provided by residues Tyr-20, Asn-60, Asp-87, Gly-129–Val-135, and Lys-359. The Toprim domain occupies Thr-439–Pro-553. Mg(2+) is bound by residues Glu-445, Asp-518, and Asp-520.

Belongs to the type II topoisomerase family. ParE type 1 subfamily. In terms of assembly, heterotetramer composed of ParC and ParE. The cofactor is Mg(2+). It depends on Mn(2+) as a cofactor. Requires Ca(2+) as cofactor.

It catalyses the reaction ATP-dependent breakage, passage and rejoining of double-stranded DNA.. Topoisomerase IV is essential for chromosome segregation. It relaxes supercoiled DNA. Performs the decatenation events required during the replication of a circular DNA molecule. The polypeptide is DNA topoisomerase 4 subunit B (Rickettsia bellii (strain RML369-C)).